Consider the following 125-residue polypeptide: Large ribosomal subunit protein bL12 (125 aa).

This sequence belongs to the bacterial ribosomal protein bL12 family. As to quaternary structure, homodimer. Part of the ribosomal stalk of the 50S ribosomal subunit. Forms a multimeric L10(L12)X complex, where L10 forms an elongated spine to which 2 to 4 L12 dimers bind in a sequential fashion. Binds GTP-bound translation factors.

Its function is as follows. Forms part of the ribosomal stalk which helps the ribosome interact with GTP-bound translation factors. Is thus essential for accurate translation. The protein is Large ribosomal subunit protein bL12 of Thioalkalivibrio sulfidiphilus (strain HL-EbGR7).